The primary structure comprises 307 residues: uncharacterized protein (307 aa).

Transmembrane regions (helical) follow at residues 1 to 21, 52 to 72, 99 to 119, 133 to 153, 174 to 194, 208 to 228, 242 to 262, and 277 to 297; these read MLILISFTALILFFLAGMNML, IVFTGILQSSSAFMVIVIGFV, FIAIKMDIVIWVLLIGGLLFF, FLGLGIIFFCISGFSHLAGPL, LLIGMVLTAIIHSSSVCIGIL, AMSVVLGSNIGTCITAVMAAV, VVFNVLGVALVLPFLTAATGF, and FSLLFNVVTALLFLPLTNLFY.

The protein resides in the cell membrane. This is an uncharacterized protein from Bacillus subtilis (strain 168).